Consider the following 767-residue polypeptide: Protein transport protein Sec23A (767 aa).

Residues Cys61, Cys66, Cys85, and Cys88 each coordinate Zn(2+). The Gelsolin-like repeat unit spans residues 634-720 (PEPVLLDSSS…EHGGSQARFL (87 aa)).

This sequence belongs to the SEC23/SEC24 family. SEC23 subfamily. As to quaternary structure, COPII is composed of at least five proteins: the Sec23/24 complex, the Sec13/31 complex and Sar1.

It is found in the cytoplasmic vesicle. The protein resides in the COPII-coated vesicle membrane. The protein localises to the endoplasmic reticulum membrane. It localises to the cytoplasm. Its subcellular location is the cytosol. Its function is as follows. Component of the coat protein complex II (COPII) which promotes the formation of transport vesicles from the endoplasmic reticulum (ER). The coat has two main functions, the physical deformation of the endoplasmic reticulum membrane into vesicles and the selection of cargo molecules for their transport to the Golgi complex. This Gallus gallus (Chicken) protein is Protein transport protein Sec23A.